A 479-amino-acid polypeptide reads, in one-letter code: MSMPSLKKYAAALFAVFLMGQSVAAHAQLPDFTPLVEAASPAVVNISTRQKVPNAVASNGGLSVPDLEGLPPMFREFFERSIPQQPRAPGGGGRQREAQSLGSGFIISKDGYILTNNHVVADADEIIVRLSDRSELEAKLIGTDPRSDVALLKVEANDLPTVKLGNSDNLKVGEWVLAIGSPFGFDHSVTAGIVSAKGRSLPNESYVPFIQTDVAINPGNSGGPLFNLDGEVVGINSQIFTRSGGFMGLSFAIPMSVAMDVADQLKASGKVSRGWLGVVIQEVNKDLAESFGLEKPAGALVAQVLEDGPAAKGGLQVGDVILSLDGKPIIMSADLPHLVGALKPGTKANLEIVREGSRKTLKVAVGTMPADDGDEATNDAAPSAERSSNRLGVSVAELTDEQKKALDLRGGVVIREVQDGPAALIGLRPGDVITHLNNQAITSAKNFTEVAQSLPKNRSVSMRVLRQGRASFITFKLAE.

Positions 1-27 (MSMPSLKKYAAALFAVFLMGQSVAAHA) are cleaved as a signal peptide. Catalysis depends on charge relay system residues His-118, Asp-148, and Ser-221. Residues 219–221 (GNS) and 276–280 (LGVVI) contribute to the substrate site. 2 consecutive PDZ domains span residues 265–356 (LKAS…VREG) and 362–468 (KVAV…LRQG). The disordered stretch occupies residues 368–390 (MPADDGDEATNDAAPSAERSSNR).

The protein belongs to the peptidase S1C family.

Its subcellular location is the periplasm. It catalyses the reaction Acts on substrates that are at least partially unfolded. The cleavage site P1 residue is normally between a pair of hydrophobic residues, such as Val-|-Val.. In terms of biological role, might be efficient in the degradation of transiently denatured and unfolded proteins which accumulate in the periplasm following stress conditions. The chain is Probable periplasmic serine endoprotease DegP-like from Pseudomonas fulva (strain 12-X).